Here is a 462-residue protein sequence, read N- to C-terminus: Elongation factor 1-alpha 1 (462 aa).

Gly2 carries the n,N,N-trimethylglycine modification. The tr-type G domain maps to 5-242 (KTHINIVVIG…DCILPPTRPT (238 aa)). The tract at residues 14 to 21 (GHVDSGKS) is G1. 14–21 (GHVDSGKS) contacts GTP. Positions 70 to 74 (GITID) are G2. The tract at residues 91-94 (DAPG) is G3. Residues 153-156 (NKMD) and 194-196 (SGW) contribute to the GTP site. Positions 153–156 (NKMD) are G4. Residues 194–196 (SGW) form a G5 region. 5-glutamyl glycerylphosphorylethanolamine is present on residues Glu301 and Glu374.

This sequence belongs to the TRAFAC class translation factor GTPase superfamily. Classic translation factor GTPase family. EF-Tu/EF-1A subfamily.

The protein localises to the cytoplasm. It catalyses the reaction GTP + H2O = GDP + phosphate + H(+). Translation elongation factor that catalyzes the GTP-dependent binding of aminoacyl-tRNA (aa-tRNA) to the A-site of ribosomes during the elongation phase of protein synthesis. Base pairing between the mRNA codon and the aa-tRNA anticodon promotes GTP hydrolysis, releasing the aa-tRNA from EEF1A1 and allowing its accommodation into the ribosome. The growing protein chain is subsequently transferred from the P-site peptidyl tRNA to the A-site aa-tRNA, extending it by one amino acid through ribosome-catalyzed peptide bond formation. The protein is Elongation factor 1-alpha 1 (EEF1A) of Gallus gallus (Chicken).